Consider the following 129-residue polypeptide: Glycine cleavage system H protein (129 aa).

In terms of domain architecture, Lipoyl-binding spans 24 to 106; the sequence is TFTVGISEHA…YGDGWLFRIK (83 aa). Lysine 65 is subject to N6-lipoyllysine.

This sequence belongs to the GcvH family. As to quaternary structure, the glycine cleavage system is composed of four proteins: P, T, L and H. It depends on (R)-lipoate as a cofactor.

The glycine cleavage system catalyzes the degradation of glycine. The H protein shuttles the methylamine group of glycine from the P protein to the T protein. The protein is Glycine cleavage system H protein of Idiomarina loihiensis (strain ATCC BAA-735 / DSM 15497 / L2-TR).